Consider the following 158-residue polypeptide: SsrA-binding protein (158 aa).

The disordered stretch occupies residues 133 to 158 (KIHDKRETEAKRDWNRQKQRLLKDNA). Residues 136–158 (DKRETEAKRDWNRQKQRLLKDNA) show a composition bias toward basic and acidic residues.

This sequence belongs to the SmpB family.

The protein localises to the cytoplasm. Required for rescue of stalled ribosomes mediated by trans-translation. Binds to transfer-messenger RNA (tmRNA), required for stable association of tmRNA with ribosomes. tmRNA and SmpB together mimic tRNA shape, replacing the anticodon stem-loop with SmpB. tmRNA is encoded by the ssrA gene; the 2 termini fold to resemble tRNA(Ala) and it encodes a 'tag peptide', a short internal open reading frame. During trans-translation Ala-aminoacylated tmRNA acts like a tRNA, entering the A-site of stalled ribosomes, displacing the stalled mRNA. The ribosome then switches to translate the ORF on the tmRNA; the nascent peptide is terminated with the 'tag peptide' encoded by the tmRNA and targeted for degradation. The ribosome is freed to recommence translation, which seems to be the essential function of trans-translation. This is SsrA-binding protein from Ruegeria pomeroyi (strain ATCC 700808 / DSM 15171 / DSS-3) (Silicibacter pomeroyi).